The sequence spans 520 residues: Ubiquitin carboxyl-terminal hydrolase 3 (520 aa).

Residue M1 is modified to N-acetylmethionine. A UBP-type zinc finger spans residues 1–121 (MECPHLSSSV…QKVREHLQNL (121 aa)). Zn(2+)-binding residues include C3, H5, C29, C32, C41, C44, C49, H56, H60, H82, C95, and C98. One can recognise a USP domain in the interval 159-511 (TGLRNLGNTC…KAYILFYVER (353 aa)). Residue C168 is the Nucleophile of the active site. The Proton acceptor role is filled by H471.

This sequence belongs to the peptidase C19 family. USP3 subfamily. Interacts (via UBP-type domain) with H2A; the interaction is less efficient than with monoubiquitinated H2A.

It localises to the nucleus. Its subcellular location is the cytoplasm. The catalysed reaction is Thiol-dependent hydrolysis of ester, thioester, amide, peptide and isopeptide bonds formed by the C-terminal Gly of ubiquitin (a 76-residue protein attached to proteins as an intracellular targeting signal).. Its function is as follows. Deubiquitinase that plays a role in several cellular processes including transcriptional regulation, cell cycle progression or innate immunity. In response to DNA damage, deubiquitinates monoubiquitinated target proteins such as histone H2A and H2AX and thereby counteracts RNF168- and RNF8-mediated ubiquitination. In turn, participates in the recruitment of DNA damage repair factors to DNA break sites. Required for proper progression through S phase and subsequent mitotic entry. Acts as a positive regulator of TP53 by deubiquitinating and stabilizing it to promote normal cell proliferation and transformation. Participates in establishing tolerance innate immune memory through non-transcriptional feedback. Mechanistically, negatively regulates TLR-induced NF-kappa-B signaling by targeting and removing the 'Lys-63'-linked polyubiquitin chains on MYD88. Negatively regulates the activation of type I interferon signaling by mediating 'Lys-63'-linked polyubiquitin chains on RIGI and IFIH1. Also deubiquinates ASC/PYCARD, the central adapter mediating the assembly and activation of most inflammasomes, and thereby promotes inflammasome activation. The protein is Ubiquitin carboxyl-terminal hydrolase 3 (Usp3) of Mus musculus (Mouse).